A 158-amino-acid polypeptide reads, in one-letter code: NAD(P)H-quinone oxidoreductase subunit J, chloroplastic (158 aa).

It belongs to the complex I 30 kDa subunit family. In terms of assembly, NDH is composed of at least 16 different subunits, 5 of which are encoded in the nucleus.

Its subcellular location is the plastid. The protein resides in the chloroplast thylakoid membrane. The enzyme catalyses a plastoquinone + NADH + (n+1) H(+)(in) = a plastoquinol + NAD(+) + n H(+)(out). It carries out the reaction a plastoquinone + NADPH + (n+1) H(+)(in) = a plastoquinol + NADP(+) + n H(+)(out). NDH shuttles electrons from NAD(P)H:plastoquinone, via FMN and iron-sulfur (Fe-S) centers, to quinones in the photosynthetic chain and possibly in a chloroplast respiratory chain. The immediate electron acceptor for the enzyme in this species is believed to be plastoquinone. Couples the redox reaction to proton translocation, and thus conserves the redox energy in a proton gradient. The polypeptide is NAD(P)H-quinone oxidoreductase subunit J, chloroplastic (Coffea arabica (Arabian coffee)).